We begin with the raw amino-acid sequence, 614 residues long: Syringomycin synthase SyrB1 (614 aa).

The 76-residue stretch at 535–610 folds into the Carrier domain; it reads KGLSEQEHFV…VLADHITRSL (76 aa). At serine 570 the chain carries O-(pantetheine 4'-phosphoryl)serine.

This sequence belongs to the ATP-dependent AMP-binding enzyme family. Pantetheine 4'-phosphate is required as a cofactor.

It carries out the reaction holo-[peptidyl-carrier protein] + L-threonine + ATP = L-threonyl-[peptidyl-carrier protein] + AMP + diphosphate. Functionally, involved in the biosynthesis of syringomycin E, a cyclic lipodepsinonapeptide toxin with phytotoxic activity. Specifically adenylates L-threonine and loads it onto its peptidyl carrier domain, via a thioester linkage to the phosphopanthetheine moiety. Is highly specific for L-threonine. This Pseudomonas syringae pv. syringae protein is Syringomycin synthase SyrB1.